Here is a 116-residue protein sequence, read N- to C-terminus: Putative iron-sulfur cluster insertion protein ErpA (116 aa).

Iron-sulfur cluster-binding residues include Cys-44, Cys-108, and Cys-110.

The protein belongs to the HesB/IscA family. In terms of assembly, homodimer. Iron-sulfur cluster is required as a cofactor.

Required for insertion of 4Fe-4S clusters. The chain is Putative iron-sulfur cluster insertion protein ErpA from Dechloromonas aromatica (strain RCB).